The following is a 494-amino-acid chain: Endoglucanase 1 (494 aa).

The signal sequence occupies residues 1–25 (MDCSSPLSLFHLLLVCTVMVKCCSA). Residue Asp82 is the Nucleophile of the active site. Residues Asn254 and Asn359 are each glycosylated (N-linked (GlcNAc...) asparagine). Active-site residues include His411, Asp462, and Glu471.

The protein belongs to the glycosyl hydrolase 9 (cellulase E) family.

The enzyme catalyses Endohydrolysis of (1-&gt;4)-beta-D-glucosidic linkages in cellulose, lichenin and cereal beta-D-glucans.. In terms of biological role, involved in ripening fruit process. In Persea americana (Avocado), this protein is Endoglucanase 1 (CEL1).